The following is a 338-amino-acid chain: Fe(3+)-binding periplasmic protein (338 aa).

A signal peptide spans Met1–Ala26. Positions 40, 88, 224, and 225 each coordinate Fe cation.

It belongs to the bacterial solute-binding protein 1 family. The complex is composed of two ATP-binding proteins (FbpC), two transmembrane proteins (FbpB) and a solute-binding protein (FbpA).

The protein resides in the periplasm. In terms of biological role, part of the ABC transporter complex FbpABC (TC 3.A.1.10.1) involved in Fe(3+) ions import. This protein specifically binds Fe(3+) and is involved in its transmembrane transport. The protein is Fe(3+)-binding periplasmic protein (fbpA) of Serratia marcescens.